We begin with the raw amino-acid sequence, 150 residues long: Large ribosomal subunit protein uL22c (150 aa).

This sequence belongs to the universal ribosomal protein uL22 family. Part of the 50S ribosomal subunit.

Its subcellular location is the plastid. Its function is as follows. This protein binds specifically to 23S rRNA. In terms of biological role, the globular domain of the protein is located near the polypeptide exit tunnel on the outside of the subunit, while an extended beta-hairpin is found that lines the wall of the exit tunnel in the center of the 70S ribosome. The chain is Large ribosomal subunit protein uL22c (rpl22) from Orobanche minor (Small broomrape).